A 59-amino-acid polypeptide reads, in one-letter code: Arabinogalactan protein 13 (59 aa).

The first 27 residues, Met-1 to Ala-27, serve as a signal peptide directing secretion. 4-hydroxyproline is present on residues Pro-31, Pro-33, and Pro-35. 3 O-linked (Ara...) hydroxyproline glycosylation sites follow: Pro-31, Pro-33, and Pro-35. Ser-37 carries the GPI-anchor amidated serine lipid modification. The propeptide at Asp-38 to Phe-59 is removed in mature form.

It belongs to the AG-peptide AGP family. Post-translationally, contains 4-hydroxyproline; hydroxylated on Pro-31, Pro-33 and Pro-35. In terms of processing, O-glycosylated on hydroxyprolines; noncontiguous hydroxylproline residues are glycosylated with arabinogalactan.

It is found in the cell membrane. Functionally, proteoglycan that seems to be implicated in diverse developmental roles such as differentiation, cell-cell recognition, embryogenesis and programmed cell death. In Arabidopsis thaliana (Mouse-ear cress), this protein is Arabinogalactan protein 13.